The primary structure comprises 244 residues: Extracellular superoxide dismutase [Cu-Zn] (244 aa).

An N-terminal signal peptide occupies residues 1–15; sequence MVAFLFCNLLLVACG. Cystine bridges form between C70-C215 and C132-C214. N-linked (GlcNAc...) asparagine glycosylation occurs at N114. Positions 121, 123, and 138 each coordinate Cu cation. The Zn(2+) site is built by H138, H146, H149, and D152. Residue H188 participates in Cu cation binding. A disordered region spans residues 224 to 244; sequence AWESQTKERKKRRRESECKTT.

The protein belongs to the Cu-Zn superoxide dismutase family. In terms of assembly, homodimer. Interacts with ATP7A; this interaction is copper-dependent and is required for SOD3 activity. The cofactor is Cu cation. It depends on Zn(2+) as a cofactor.

It is found in the secreted. Its subcellular location is the extracellular space. It localises to the golgi apparatus. The protein resides in the trans-Golgi network. The catalysed reaction is 2 superoxide + 2 H(+) = H2O2 + O2. In terms of biological role, protect the extracellular space from toxic effect of reactive oxygen intermediates by converting superoxide radicals into hydrogen peroxide and oxygen. The polypeptide is Extracellular superoxide dismutase [Cu-Zn] (Sod3) (Rattus norvegicus (Rat)).